The primary structure comprises 384 residues: MKRISILGVTGSIGTQTLDVLRFHKEDFELVGITANRNIELTMDIIKEFSPKYVAINHEESYKKLVDLVKSEGLKCEVIYGMEGLVKVATLDEIDIVVTSVVGMIGLKPTVEAIRKGKNIALANKETLVVAGELVMREAKENGVKILAVDSEHSAIFQSLQGNAHNKIDKILLTASGGPFRGFTIKDLKSVTPERALKHPKWNMGQKISIDSSTLMNKGLEVIEAHWLFDCPYKDIEVVVHPQSIIHSMVQYTDGAVIAQLGVPDMKLPIQYALNYPNREGNISEKLDLFKIRELTFEKPDLDTFKCLKLAYEAGEKGKLMPTILNGANEVCVELFLNKKITYLQIPEIIEECMNTFDYNKEVTLDNVINLDKEVRQYIYEKYN.

Residues T10, G11, S12, I13, R37, N38, and N124 each contribute to the NADPH site. K125 is a binding site for 1-deoxy-D-xylulose 5-phosphate. E126 provides a ligand contact to NADPH. Position 150 (D150) interacts with Mn(2+). The 1-deoxy-D-xylulose 5-phosphate site is built by S151, E152, S176, and H199. Residue E152 coordinates Mn(2+). G205 is an NADPH binding site. 1-deoxy-D-xylulose 5-phosphate contacts are provided by S212, N217, K218, and E221. E221 contributes to the Mn(2+) binding site.

The protein belongs to the DXR family. Mg(2+) is required as a cofactor. Mn(2+) serves as cofactor.

The catalysed reaction is 2-C-methyl-D-erythritol 4-phosphate + NADP(+) = 1-deoxy-D-xylulose 5-phosphate + NADPH + H(+). Its pathway is isoprenoid biosynthesis; isopentenyl diphosphate biosynthesis via DXP pathway; isopentenyl diphosphate from 1-deoxy-D-xylulose 5-phosphate: step 1/6. Functionally, catalyzes the NADPH-dependent rearrangement and reduction of 1-deoxy-D-xylulose-5-phosphate (DXP) to 2-C-methyl-D-erythritol 4-phosphate (MEP). The polypeptide is 1-deoxy-D-xylulose 5-phosphate reductoisomerase (Clostridium perfringens (strain SM101 / Type A)).